Consider the following 126-residue polypeptide: Heterotrimeric G protein gamma subunit GPG1 (126 aa).

G proteins are composed of 3 units, alpha, beta and gamma. GPG1 interacts with the beta subunits GBP1 and GPB2.

It localises to the cytoplasm. In terms of biological role, gamma subunit of a guanine nucleotide-binding protein (G protein). G proteins are involved as modulators or transducers in various transmembrane signaling systems. The beta and gamma chains are required for the GTPase activity, for replacement of GDP by GTP, and for G protein-effector interaction. Involved in the determination of the cAMP level according to nutritional conditions, most probably as a regulator of cAMP phosphodiesterase. Required for the control of pseudohyphal and haploid invasive growth. The protein is Heterotrimeric G protein gamma subunit GPG1 (GPG1) of Saccharomyces cerevisiae (strain ATCC 204508 / S288c) (Baker's yeast).